A 77-amino-acid polypeptide reads, in one-letter code: Teretoxin Tan15.2 (77 aa).

Residues 1-21 (MTRLTVVFLAILVLLPLATSN) form the signal peptide. A propeptide spanning residues 22–40 (SGADEAPASLSDLLHRTKR) is cleaved from the precursor.

Post-translationally, contains 4 disulfide bonds. Expressed by the venom duct.

It is found in the secreted. The protein is Teretoxin Tan15.2 of Terebra anilis (Auger snail).